Here is a 572-residue protein sequence, read N- to C-terminus: Transmembrane glycoprotein NMB (572 aa).

The signal sequence occupies residues 1–22; sequence MESLCGVLVFLLLAAGLPLQAA. The Extracellular portion of the chain corresponds to 23–500; the sequence is KRFRDVLGHE…DLGSPLRTVN (478 aa). Asn-93, Asn-134, Asn-200, Asn-249, Asn-275, Asn-296, Asn-300, Asn-306, and Asn-312 each carry an N-linked (GlcNAc...) asparagine glycan. In terms of domain architecture, PKD spans 251-338; the sequence is SDETFLRDLP…SPSSSTSPSP (88 aa). Positions 321-359 are disordered; that stretch reads GPCPSPTPSPSSSTSPSPASSPSPTLSTPSPSLMPTGHK. The segment covering 330–356 has biased composition (low complexity); the sequence is PSSSTSPSPASSPSPTLSTPSPSLMPT. Asn-461 and Asn-469 each carry an N-linked (GlcNAc...) asparagine glycan. The chain crosses the membrane as a helical span at residues 501–521; sequence GVLISIGCLAMFVTMVTILLY. At 522–572 the chain is on the cytoplasmic side; that stretch reads KKHKTYKPIGNCTRNVVKGKGLSVFLSHAKAPFSRGDREKDPLLQDKPWML. Phosphoserine is present on Ser-544. Residues 556–558 carry the Cell attachment site motif; the sequence is RGD.

It belongs to the PMEL/NMB family.

It is found in the cell membrane. Its subcellular location is the melanosome membrane. The protein localises to the early endosome membrane. Could be a melanogenic enzyme. In Rattus norvegicus (Rat), this protein is Transmembrane glycoprotein NMB (Gpnmb).